Here is a 401-residue protein sequence, read N- to C-terminus: Argininosuccinate synthase (401 aa).

Residue 8–16 participates in ATP binding; the sequence is AYSGGLDTS. Positions 86 and 91 each coordinate L-citrulline. Gly116 serves as a coordination point for ATP. L-aspartate contacts are provided by Thr118, Asn122, and Asp123. Asn122 serves as a coordination point for L-citrulline. L-citrulline-binding residues include Arg126, Ser175, Ser184, Glu260, and Tyr272.

This sequence belongs to the argininosuccinate synthase family. Type 1 subfamily. As to quaternary structure, homotetramer.

The protein localises to the cytoplasm. The catalysed reaction is L-citrulline + L-aspartate + ATP = 2-(N(omega)-L-arginino)succinate + AMP + diphosphate + H(+). Its pathway is amino-acid biosynthesis; L-arginine biosynthesis; L-arginine from L-ornithine and carbamoyl phosphate: step 2/3. The chain is Argininosuccinate synthase from Clostridium kluyveri (strain ATCC 8527 / DSM 555 / NBRC 12016 / NCIMB 10680 / K1).